The chain runs to 357 residues: Crh-like protein 1 (357 aa).

The N-terminal stretch at 1–17 (MMLPLLAVSAFASLGAA) is a signal peptide. Residues 20–220 (YTSCNPTNSL…WAGGETDYDE (201 aa)) enclose the GH16 domain. Residues asparagine 52 and asparagine 92 are each glycosylated (N-linked (GlcNAc...) asparagine). Glutamate 109 functions as the Nucleophile in the catalytic mechanism. The Proton donor role is filled by glutamate 113. Glutamate 113 is a binding site for chitin. Residue asparagine 131 is glycosylated (N-linked (GlcNAc...) asparagine). Residues lysine 193, tryptophan 197, and threonine 208 each coordinate chitin. N-linked (GlcNAc...) asparagine glycosylation is found at asparagine 242 and asparagine 257. Residue glycine 326 is the site of GPI-anchor amidated glycine attachment. Positions 327-357 (SASAVFTGAAVTNLPSFFFTVFFALAIALAF) are cleaved as a propeptide — removed in mature form. Residues 337–357 (VTNLPSFFFTVFFALAIALAF) form a helical membrane-spanning segment.

Belongs to the glycosyl hydrolase 16 family. CRH1 subfamily. The GPI-like anchor contains a phosphoceramide lipid group. The anchor position has not been determined.

The protein localises to the cell membrane. The protein resides in the secreted. It localises to the cell wall. It catalyses the reaction Random endo-hydrolysis of N-acetyl-beta-D-glucosaminide (1-&gt;4)-beta-linkages in chitin and chitodextrins.. Its function is as follows. Dual chitinase/transglycosylase that plays a role in cell wall architecture. Chitinase and transglycosylase activities are coupled. Required for the polysaccharide cross-linking at the septa and the cell wall. More specifically, transfers chitin to 1,6-beta-glucan in the cell wall. The protein is Crh-like protein 1 of Aspergillus fumigatus (strain ATCC MYA-4609 / CBS 101355 / FGSC A1100 / Af293) (Neosartorya fumigata).